A 33-amino-acid chain; its full sequence is Mu-theraphotoxin-Os1a (33 aa).

Intrachain disulfides connect Cys2/Cys17, Cys9/Cys22, and Cys16/Cys29. Leu33 bears the Leucine amide mark.

This sequence belongs to the neurotoxin 10 (Hwtx-1) family. 14 (Hntx-1) subfamily. Monomer. As to expression, expressed by the venom gland.

It is found in the secreted. In terms of biological role, potently and reversibly inhibits some human voltage-gated sodium channels (Nav1.1/SCN1A (IC(50)=72.0 nM), Nav1.2/SCN2A (IC(50)=75.5 nM), Nav1.6/SCN8A (IC(50)=115.0 nM), Nav1.7/SCN9A (IC(50)=52.7-129.5 nM), Nav1.3/SCN3A (IC(50)=306.6 nM)). The hNav1.7/SCN9A channel inhibition occurs without any change in steady-state inactivation- and conductance-voltage relationships. On adult mouse DRG neurons, this toxin is approximately 1000-fold more efficient to inhibit tetrodotoxin (TTX)-sensitive than TTX-resistant sodium currents. In vivo, this toxin exhibits analgesic effects in mice pain models. This is Mu-theraphotoxin-Os1a from Omothymus schioedtei (Malaysian earth tiger tarantula).